The sequence spans 103 residues: Sec-independent protein translocase protein TatA (103 aa).

A helical membrane pass occupies residues 1–21; the sequence is MGNIFSPTHLIVILLIIIVLF. The disordered stretch occupies residues 77–103; it reads KRATTRVKGSSSSRKGKTSVVKKQRVK. Residues 90-103 are compositionally biased toward basic residues; sequence RKGKTSVVKKQRVK.

Belongs to the TatA/E family. As to quaternary structure, the Tat system comprises two distinct complexes: a TatABC complex, containing multiple copies of TatA, TatB and TatC subunits, and a separate TatA complex, containing only TatA subunits. Substrates initially bind to the TatABC complex, which probably triggers association of the separate TatA complex to form the active translocon.

The protein resides in the cell inner membrane. Part of the twin-arginine translocation (Tat) system that transports large folded proteins containing a characteristic twin-arginine motif in their signal peptide across membranes. TatA could form the protein-conducting channel of the Tat system. This Bartonella henselae (strain ATCC 49882 / DSM 28221 / CCUG 30454 / Houston 1) (Rochalimaea henselae) protein is Sec-independent protein translocase protein TatA.